Reading from the N-terminus, the 329-residue chain is Probable cell division protein WhiA (329 aa).

Residues 275–308 constitute a DNA-binding region (H-T-H motif); the sequence is SLEELGALADPPLTKDAVAGRIRRLLAMADKRAQ.

Belongs to the WhiA family.

Its function is as follows. Involved in cell division and chromosome segregation. The polypeptide is Probable cell division protein WhiA (Streptomyces griseus subsp. griseus (strain JCM 4626 / CBS 651.72 / NBRC 13350 / KCC S-0626 / ISP 5235)).